Reading from the N-terminus, the 717-residue chain is Fatty acid oxidation complex subunit alpha (717 aa).

The enoyl-CoA hydratase/isomerase stretch occupies residues 1–190; it reads MIHAGNAITV…KDGAVDAVVA (190 aa). Residue aspartate 298 coordinates substrate. The 3-hydroxyacyl-CoA dehydrogenase stretch occupies residues 313–717; that stretch reads HPVNQAAVLG…MAANNKKFYG (405 aa). NAD(+)-binding positions include methionine 326, aspartate 345, 402-404, lysine 409, and serine 431; that span reads VTE. The active-site For 3-hydroxyacyl-CoA dehydrogenase activity is the histidine 452. Residue asparagine 455 coordinates NAD(+). Asparagine 502 is a substrate binding site.

In the N-terminal section; belongs to the enoyl-CoA hydratase/isomerase family. This sequence in the C-terminal section; belongs to the 3-hydroxyacyl-CoA dehydrogenase family. Heterotetramer of two alpha chains (FadB) and two beta chains (FadA).

The catalysed reaction is a (3S)-3-hydroxyacyl-CoA + NAD(+) = a 3-oxoacyl-CoA + NADH + H(+). The enzyme catalyses a (3S)-3-hydroxyacyl-CoA = a (2E)-enoyl-CoA + H2O. It catalyses the reaction a 4-saturated-(3S)-3-hydroxyacyl-CoA = a (3E)-enoyl-CoA + H2O. It carries out the reaction (3S)-3-hydroxybutanoyl-CoA = (3R)-3-hydroxybutanoyl-CoA. The catalysed reaction is a (3Z)-enoyl-CoA = a 4-saturated (2E)-enoyl-CoA. The enzyme catalyses a (3E)-enoyl-CoA = a 4-saturated (2E)-enoyl-CoA. The protein operates within lipid metabolism; fatty acid beta-oxidation. Involved in the aerobic and anaerobic degradation of long-chain fatty acids via beta-oxidation cycle. Catalyzes the formation of 3-oxoacyl-CoA from enoyl-CoA via L-3-hydroxyacyl-CoA. It can also use D-3-hydroxyacyl-CoA and cis-3-enoyl-CoA as substrate. This is Fatty acid oxidation complex subunit alpha from Acinetobacter baumannii (strain AB307-0294).